The primary structure comprises 356 residues: Peritrophin-44 (356 aa).

The first 23 residues, 1–23, serve as a signal peptide directing secretion; the sequence is MKELQITTGCLLLMVAAIGKTSA. 5 consecutive Chitin-binding type-2 domains span residues 28–85, 88–146, 147–201, 220–283, and 286–355; these read SETC…KCIS, KNAC…ECTA, DSIC…PCLA, NFVC…PCTF, and CGNL…YKLC. Cys-62 and Cys-75 are joined by a disulfide. N-linked (GlcNAc...) asparagine glycosylation is present at Asn-114. 3 disulfides stabilise this stretch: Cys-122–Cys-135, Cys-181–Cys-193, and Cys-262–Cys-273. Asn-309 carries N-linked (GlcNAc...) asparagine glycosylation.

Glycosylated. As to expression, larval peritrophic membrane.

Functionally, may have roles in the maintenance of peritrophic membrane structure and in the determination of the porosity of the peritrophic membrane. May bind chitin or related oligosaccharide structures. The protein is Peritrophin-44 of Lucilia cuprina (Green bottle fly).